A 192-amino-acid chain; its full sequence is MTKGRLEAFSDGVLAIIITIMVLELKVPEGSSWASLQPILPRFLAYIFSFIYVGIYWNNHHHLFQTVKKVNGSILWANLHLLFWLSLMPIATEWIGTSHFAQNPVATYGIGLIMSAIAYTILENVIIRCEGENSKLKEAIHSKFKEYISIIFYVLGIATSFFYPYIAIGFYYLVALIWLIPDKRIEKSLKEN.

The helical transmembrane segment at 1–24 (MTKGRLEAFSDGVLAIIITIMVLE) threads the bilayer. Residues 5 to 11 (RLEAFSD) carry the RxxxFSD motif motif. L25 is a topological domain (cytoplasmic). The tract at residues 26-29 (KVPE) is short helix H1. Topologically, residues 26–39 (KVPEGSSWASLQPI) are extracellular. Residues 31–37 (SSWASLQ) form a short helix H2 region. Residues 40-65 (LPRFLAYIFSFIYVGIYWNNHHHLFQ) form a helical membrane-spanning segment. Residues 66–71 (TVKKVN) are Cytoplasmic-facing. A helical membrane pass occupies residues 72–93 (GSILWANLHLLFWLSLMPIATE). The Extracellular segment spans residues 94 to 101 (WIGTSHFA). A helical membrane pass occupies residues 102-126 (QNPVATYGIGLIMSAIAYTILENVI). Topologically, residues 127 to 133 (IRCEGEN) are cytoplasmic. Residues 134–162 (SKLKEAIHSKFKEYISIIFYVLGIATSFF) form a helical membrane-spanning segment. Over 163 to 164 (YP) the chain is Extracellular. A helical transmembrane segment spans residues 165 to 180 (YIAIGFYYLVALIWLI). Topologically, residues 181-192 (PDKRIEKSLKEN) are cytoplasmic.

It belongs to the TMEM175 family. Homotetramer.

The protein resides in the membrane. The catalysed reaction is K(+)(in) = K(+)(out). Potassium channel. In Chryseobacterium sp. (strain P1-3), this protein is Potassium channel HX13_20290.